We begin with the raw amino-acid sequence, 874 residues long: Alanine--tRNA ligase (874 aa).

The Zn(2+) site is built by H563, H567, C665, and H669.

Belongs to the class-II aminoacyl-tRNA synthetase family. Requires Zn(2+) as cofactor.

The protein localises to the cytoplasm. The enzyme catalyses tRNA(Ala) + L-alanine + ATP = L-alanyl-tRNA(Ala) + AMP + diphosphate. Catalyzes the attachment of alanine to tRNA(Ala) in a two-step reaction: alanine is first activated by ATP to form Ala-AMP and then transferred to the acceptor end of tRNA(Ala). Also edits incorrectly charged Ser-tRNA(Ala) and Gly-tRNA(Ala) via its editing domain. The sequence is that of Alanine--tRNA ligase from Actinobacillus pleuropneumoniae serotype 3 (strain JL03).